Reading from the N-terminus, the 2492-residue chain is MTAEPMSESKLNTLVQKLHDFLAHSSEESEETSSPPRLAMNQNTDKISGSGSNSDMMENSKEEGTSSSEKSKSSGSSRSKRKPSIVTKYVESDDEKPLDDETVNEDASNENSENDITMQSLPKGTVIVQPEPVLNEDKDDFKGPEFRSRSKMKTENLKKRGEDGLHGIVSCTACGQQVNHFQKDSIYRHPSLQVLICKNCFKYYMSDDISRDSDGMDEQCRWCAEGGNLICCDFCHNAFCKKCILRNLGRKELSTIMDENNQWYCYICHPEPLLDLVTACNSVFDNLEQLLQQNKKKIKVDSEKSNKVYEHTSRFSPKKTSSNCNGEEKKLDDSCSGSVTYSYSALIVPKEMIKKAKKLIETTANMNSSYVKFLKQATDNSEINSATKLRQLKAFKSVLADIKKAHLALEEDLNSEFRAMDAVSKEKNTKEHKVIEAKFETKARKGEKPCALEKKDISKSEAKLSRKQVDSEHMYQNVPTEEQRANKSTGGEHKKSDRKEEPQYEPANTSEDLDMDIVSVPSSVPEDIFENLETAMEVQSSVDHQGDGSSGTEQEVESSSVKLSISSKDNRGGIKSKTTAKVTKELYVKLTPVSLSNSPIKGADCQEVPQDKDGYKSCGLNPKLEKCGLGQENSDNEHLVENEVSLLLEESDLRRSPRVKTTPLRRQTETNPVTSNSDEECNETVKEKQKLSVPVRKKDKRNSSDSAIDNPKPNKLPKSKQSETVDQNSDSDEMLAILKEVSRMSHSSSSDTDINEIHTNHKTLYDLKTQAGKDDKGKRKRKSSTSGSDFDTKKGKSAKSSIISKKKRQTQSESSNYDSELEKEIKSMSKIGAARTTKKRIPNTKDFDSSEDEKHSKKGMDNQGHKNLKTSQEGSSDDAERKQERENFSSAEGTVDKDTTIMELRDRLPKKQQASASTDGVDKLSGKEEGFTSLEVRKVAETKEKSKHLKTKICKKVQDGLSDITEKFLKKDQSDETSEDDKKQSKKGTEEKKKTSDFKKKVIKMEQQYESSSDGTEKLPEREEICHFPKGIKQIKNGTTDGEKKNKKIRDKTSKKKDELSDYAEKSTGKGDSCDSSEDKKSKNGAYGREKKRCTLLGKSSRKRQDCSSSDTEKYSMKEDGCNSSDKRLKRIELRERRNLSSKRNTKEIQSGSSSSDAEESSEDNKKKKQRTSSKKKAVIVKEKKRNSLRTSTKRKQADITSSSSSDIEDDDQNSIGEGSSDEQKIKPVTENLVLSSHTGFCQSSGDEALSKSVPVTVDDDDDDNDPENRIAKKMLLEEIKANLSSDEDGSSDDEPEEGKKRTGKQNEENPGDEEAKNQVNSESDSDSEESKKPRYRHRLLRHKLTVSDGESGEEKKTKPKEHKEVKGRNRRKVSSEDSEDSDFQESGVSEEVSESEDEQRPRTRSAKKAELEENQRSYKQKKKRRRIKVQEDSSSENKSNSEEEEEEKEEEEEEEEEEEEEEEDENDDSKSPGKGRKKIRKILKDDKLRTETQNALKEEEERRKRIAEREREREKLREVIEIEDASPTKCPITTKLVLDEDEETKEPLVQVHRNMVIKLKPHQVDGVQFMWDCCCESVKKTKKSPGSGCILAHCMGLGKTLQVVSFLHTVLLCDKLDFSTALVVCPLNTALNWMNEFEKWQEGLKDDEKLEVSELATVKRPQERSYMLQRWQEDGGVMIIGYEMYRNLAQGRNVKSRKLKEIFNKALVDPGPDFVVCDEGHILKNEASAVSKAMNSIRSRRRIILTGTPLQNNLIEYHCMVNFIKENLLGSIKEFRNRFINPIQNGQCADSTMVDVRVMKKRAHILYEMLAGCVQRKDYTALTKFLPPKHEYVLAVRMTSIQCKLYQYYLDHLTGVGNNSEGGRGKAGAKLFQDFQMLSRIWTHPWCLQLDYISKENKGYFDEDSMDEFIASDSDETSMSLSSDDYTKKKKKGKKGKKDSSSSGSGSDNDVEVIKVWNSRSRGGGEGNVDETGNNPSVSLKLEESKATSSSNPSSPAPDWYKDFVTDADAEVLEHSGKMVLLFEILRMAEEIGDKVLVFSQSLISLDLIEDFLELASREKTEDKDKPLIYKGEGKWLRNIDYYRLDGSTTAQSRKKWAEEFNDETNVRGRLFIISTKAGSLGINLVAANRVIIFDASWNPSYDIQSIFRVYRFGQTKPVYVYRFLAQGTMEDKIYDRQVTKQSLSFRVVDQQQVERHFTMNELTELYTFEPDLLDDPNSEKKKKRDTPMLPKDTILAELLQIHKEHIVGYHEHDSLLDHKEEEELTEEERKAAWAEYEAEKKGLTMRFNIPTGTNLPPVSFNSQTPYIPFNLGALSAMSNQQLEDLINQGREKVVEATNSVTAVRIQPLEDIISAVWKENMNLSEAQVQALALSRQASQELDVKRREAIYNDVLTKQQMLISCVQRILMNRRLQQQYNQQQQQQMTYQQATLGHLMMPKPPNLIMNPSNYQQIDMRGMYQPVAGGMQPPPLQRAPPPMRSKNPGPSQGKSM.

The disordered stretch occupies residues 1–146 (MTAEPMSESK…DKDDFKGPEF (146 aa)). Residue Lys10 forms a Glycyl lysine isopeptide (Lys-Gly) (interchain with G-Cter in SUMO2) linkage. Residues 17-27 (KLHDFLAHSSE) show a composition bias toward basic and acidic residues. 2 positions are modified to phosphoserine: Ser25 and Ser34. Positions 40–57 (MNQNTDKISGSGSNSDMM) are enriched in polar residues. Over residues 58–72 (ENSKEEGTSSSEKSK) the composition is skewed to basic and acidic residues. The residue at position 89 (Tyr89) is a Phosphotyrosine. Phosphoserine is present on residues Ser92 and Ser112. Residues 92 to 108 (SDDEKPLDDETVNEDAS) are compositionally biased toward acidic residues. A compositionally biased stretch (basic and acidic residues) spans 135 to 146 (NEDKDDFKGPEF). Glycyl lysine isopeptide (Lys-Gly) (interchain with G-Cter in SUMO2) cross-links involve residues Lys138 and Lys142. Residues 159-296 (KRGEDGLHGI…LEQLLQQNKK (138 aa)) enclose the ADD domain. The GATA-type; atypical zinc finger occupies 170-206 (SCTACGQQVNHFQKDSIYRHPSLQVLICKNCFKYYMS). Ser213 carries the post-translational modification Phosphoserine. Residues 217 to 272 (DEQCRWCAEGGNLICCDFCHNAFCKKCILRNLGRKELSTIMDENNQWYCYICHPEP) form a PHD-type; atypical zinc finger. Lys299 is covalently cross-linked (Glycyl lysine isopeptide (Lys-Gly) (interchain with G-Cter in SUMO2)). Ser316 bears the Phosphoserine mark. Lys438 participates in a covalent cross-link: Glycyl lysine isopeptide (Lys-Gly) (interchain with G-Cter in SUMO2). Basic and acidic residues-rich tracts occupy residues 457–473 (ISKS…DSEH) and 481–502 (EEQR…KEEP). The tract at residues 457–581 (ISKSEAKLSR…GGIKSKTTAK (125 aa)) is disordered. A compositionally biased stretch (low complexity) spans 557 to 567 (ESSSVKLSISS). A PxVxL motif motif is present at residues 581–594 (KVTKELYVKLTPVS). At Thr591 the chain carries Phosphothreonine. A disordered region spans residues 593 to 619 (VSLSNSPIKGADCQEVPQDKDGYKSCG). Phosphoserine is present on residues Ser594 and Ser598. Lys623 is covalently cross-linked (Glycyl lysine isopeptide (Lys-Gly) (interchain with G-Cter in SUMO1); alternate). Lys623 participates in a covalent cross-link: Glycyl lysine isopeptide (Lys-Gly) (interchain with G-Cter in SUMO2); alternate. Residue Ser634 is modified to Phosphoserine. The disordered stretch occupies residues 652 to 949 (DLRRSPRVKT…AETKEKSKHL (298 aa)). The residue at position 674 (Thr674) is a Phosphothreonine. Phosphoserine is present on residues Ser675, Ser677, Ser729, and Ser731. The segment covering 755 to 777 (NEIHTNHKTLYDLKTQAGKDDKG) has biased composition (basic and acidic residues). Phosphoserine is present on residues Ser784, Ser819, Ser849, Ser850, Ser875, and Ser876. Residues 843–864 (NTKDFDSSEDEKHSKKGMDNQG) show a composition bias toward basic and acidic residues. The segment covering 878 to 887 (DAERKQEREN) has biased composition (basic and acidic residues). At Ser889 the chain carries Phosphoserine. Basic and acidic residues-rich tracts occupy residues 894–909 (TVDK…DRLP) and 920–944 (GVDK…ETKE). Ser962 is subject to Phosphoserine. Lys967 bears the N6-acetyllysine mark. Residues 967–1004 (KFLKKDQSDETSEDDKKQSKKGTEEKKKTSDFKKKVIK) show a composition bias toward basic and acidic residues. Residues 967–1479 (KFLKKDQSDE…SKSPGKGRKK (513 aa)) are disordered. The residue at position 974 (Ser974) is a Phosphoserine. At Thr977 the chain carries Phosphothreonine. A Glycyl lysine isopeptide (Lys-Gly) (interchain with G-Cter in SUMO2) cross-link involves residue Lys1004. Phosphoserine occurs at positions 1011, 1012, and 1013. The span at 1015–1027 (GTEKLPEREEICH) shows a compositional bias: basic and acidic residues. A compositionally biased stretch (basic residues) spans 1045–1055 (KNKKIRDKTSK). 2 stretches are compositionally biased toward basic and acidic residues: residues 1056-1082 (KKDE…DKKS) and 1103-1139 (KRQD…ERRN). The residue at position 1061 (Ser1061) is a Phosphoserine. Tyr1063 is subject to Phosphotyrosine. Residues 1167-1195 (KKKQRTSSKKKAVIVKEKKRNSLRTSTKR) show a composition bias toward basic residues. Residues 1189 to 1326 (LRTSTKRKQA…KNQVNSESDS (138 aa)) form an interaction with DAXX region. The span at 1233 to 1246 (LVLSSHTGFCQSSG) shows a compositional bias: polar residues. 3 positions are modified to phosphoserine: Ser1244, Ser1245, and Ser1253. Residues 1267–1281 (PENRIAKKMLLEEIK) show a composition bias toward basic and acidic residues. The span at 1286 to 1297 (SDEDGSSDDEPE) shows a compositional bias: acidic residues. Over residues 1298 to 1308 (EGKKRTGKQNE) the composition is skewed to basic and acidic residues. Phosphoserine occurs at positions 1322, 1324, and 1326. Over residues 1334-1345 (PRYRHRLLRHKL) the composition is skewed to basic residues. 2 positions are modified to phosphoserine: Ser1348 and Ser1352. Composition is skewed to basic and acidic residues over residues 1353 to 1368 (GEEK…EVKG) and 1408 to 1417 (KKAELEENQR). Residues 1419 to 1428 (YKQKKKRRRI) are compositionally biased toward basic residues. Residues 1443 to 1468 (EEEEEEKEEEEEEEEEEEEEEEDEND) are compositionally biased toward acidic residues. Lys1488 is covalently cross-linked (Glycyl lysine isopeptide (Lys-Gly) (interchain with G-Cter in SUMO2)). Position 1527 is a phosphoserine (Ser1527). Thr1529 bears the Phosphothreonine mark. The Helicase ATP-binding domain occupies 1581 to 1768 (KTKKSPGSGC…HCMVNFIKEN (188 aa)). Position 1594 to 1601 (1594 to 1601 (HCMGLGKT)) interacts with ATP. Positions 1719-1722 (DEGH) match the DEGH box motif. Residues Ser1906 and Ser1913 each carry the phosphoserine modification. The segment at 1913–2000 (SDSDETSMSL…SSNPSSPAPD (88 aa)) is disordered. Residues 1929-1938 (KKKKKGKKGK) show a composition bias toward basic residues. Lys1982 is covalently cross-linked (Glycyl lysine isopeptide (Lys-Gly) (interchain with G-Cter in SUMO1); alternate). Lys1982 participates in a covalent cross-link: Glycyl lysine isopeptide (Lys-Gly) (interchain with G-Cter in SUMO2); alternate. Residue Lys1987 forms a Glycyl lysine isopeptide (Lys-Gly) (interchain with G-Cter in SUMO2) linkage. Positions 1990–1999 (SSSNPSSPAP) are enriched in low complexity. A phosphoserine mark is found at Ser1992 and Ser1996. Residues 2010–2280 (DAEVLEHSGK…RKAAWAEYEA (271 aa)) are interaction with MECP2. The Helicase C-terminal domain maps to 2025 to 2205 (EILRMAEEIG…ERHFTMNELT (181 aa)). A Phosphoserine modification is found at Ser2220. Residues 2462 to 2492 (PVAGGMQPPPLQRAPPPMRSKNPGPSQGKSM) are disordered. Over residues 2468-2479 (QPPPLQRAPPPM) the composition is skewed to pro residues. An omega-N-methylarginine mark is found at Arg2474 and Arg2480.

This sequence belongs to the SNF2/RAD54 helicase family. In terms of assembly, interacts with DAXX to form the chromatin remodeling complex ATRX:DAXX. Probably binds EZH2. Binds annexin V in a calcium and phosphatidylcholine/phosphatidylserine-dependent manner. Interacts directly with CBX5 via the PxVxL motif. Interacts with RAD50, MRE11 and NBN; indicative for an association with the MRN complex. Interacts with histone MACROH2A1. Interacts with histone H3 peptides methylated at 'Lys-10' with preferences H3K9me3 &gt; H3K9me2 &gt; H3K9me1. Interacts with histone H3 peptides unmethylated at 'Lys-5' (H3K4me0). Interacts with MECP2, SMC1 and SMC3. Interacts with SETDB1, TRIM28 and ZNF274.

It is found in the nucleus. The protein localises to the chromosome. The protein resides in the telomere. Its subcellular location is the PML body. The catalysed reaction is ATP + H2O = ADP + phosphate + H(+). In terms of biological role, involved in transcriptional regulation and chromatin remodeling. Facilitates DNA replication in multiple cellular environments and is required for efficient replication of a subset of genomic loci. Binds to DNA tandem repeat sequences in both telomeres and euchromatin and in vitro binds DNA quadruplex structures. May help stabilizing G-rich regions into regular chromatin structures by remodeling G4 DNA and incorporating H3.3-containing nucleosomes. Catalytic component of the chromatin remodeling complex ATRX:DAXX which has ATP-dependent DNA translocase activity and catalyzes the replication-independent deposition of histone H3.3 in pericentric DNA repeats outside S-phase and telomeres, and the in vitro remodeling of H3.3-containing nucleosomes. Its heterochromatin targeting is proposed to involve a combinatorial readout of histone H3 modifications (specifically methylation states of H3K9 and H3K4) and association with CBX5. Involved in maintaining telomere structural integrity in embryonic stem cells which probably implies recruitment of CBX5 to telomeres. May be involved in transcriptional regulation of telomeric repeat-containing RNA (TERRA). Acts as a negative regulator of chromatin incorporation of transcriptionally repressive histone MACROH2A1, particularily at telomeres. Participates in the allele-specific gene expression at the imprinted IGF2/H19 gene locus. On the maternal allele, required for the chromatin occupancy of SMC1 and CTCTF within the H19 imprinting control region (ICR) and involved in esatblishment of histone tails modifications in the ICR. May be involved in brain development and facial morphogenesis. Binds to zinc-finger coding genes with atypical chromatin signatures and regulates its H3K9me3 levels. Forms a complex with ZNF274, TRIM28 and SETDB1 to facilitate the deposition and maintenance of H3K9me3 at the 3' exons of zinc-finger genes. The sequence is that of Transcriptional regulator ATRX (ATRX) from Pongo pygmaeus (Bornean orangutan).